A 519-amino-acid polypeptide reads, in one-letter code: T-complex protein 1 subunit gamma (519 aa).

It belongs to the TCP-1 chaperonin family. As to quaternary structure, component of the T-complex protein 1 (TCP1) complex.

The protein localises to the cytoplasm. Functionally, molecular chaperone; assists the folding of proteins upon ATP hydrolysis. This chain is T-complex protein 1 subunit gamma (CCT3), found in Encephalitozoon cuniculi (strain GB-M1) (Microsporidian parasite).